Consider the following 353-residue polypeptide: Photosystem II protein D1 (353 aa).

Residue Thr2 is modified to N-acetylthreonine. Thr2 bears the Phosphothreonine mark. Transmembrane regions (helical) follow at residues 29–46 (YIGW…TATS), 118–133 (HFLL…EWEL), and 142–156 (WIAV…AAAA). His118 contacts chlorophyll a. Residue Tyr126 participates in pheophytin a binding. The [CaMn4O5] cluster site is built by Asp170 and Glu189. A helical membrane pass occupies residues 197–218 (FHMLGVAGVFGGSLFSAMHGSL). His198 is a chlorophyll a binding site. Residues His215 and 264-265 (SF) contribute to the a quinone site. His215 serves as a coordination point for Fe cation. His272 is a binding site for Fe cation. The chain crosses the membrane as a helical span at residues 274–288 (FLAAWPVVGIWFTAL). Residues His332, Glu333, Asp342, and Ala344 each contribute to the [CaMn4O5] cluster site. Residues 345–353 (AVEAPSING) constitute a propeptide that is removed on maturation.

The protein belongs to the reaction center PufL/M/PsbA/D family. PSII is composed of 1 copy each of membrane proteins PsbA, PsbB, PsbC, PsbD, PsbE, PsbF, PsbH, PsbI, PsbJ, PsbK, PsbL, PsbM, PsbT, PsbX, PsbY, PsbZ, Psb30/Ycf12, at least 3 peripheral proteins of the oxygen-evolving complex and a large number of cofactors. It forms dimeric complexes. The D1/D2 heterodimer binds P680, chlorophylls that are the primary electron donor of PSII, and subsequent electron acceptors. It shares a non-heme iron and each subunit binds pheophytin, quinone, additional chlorophylls, carotenoids and lipids. D1 provides most of the ligands for the Mn4-Ca-O5 cluster of the oxygen-evolving complex (OEC). There is also a Cl(-1) ion associated with D1 and D2, which is required for oxygen evolution. The PSII complex binds additional chlorophylls, carotenoids and specific lipids. serves as cofactor. Post-translationally, tyr-161 forms a radical intermediate that is referred to as redox-active TyrZ, YZ or Y-Z. In terms of processing, C-terminally processed by CTPA; processing is essential to allow assembly of the oxygen-evolving complex and thus photosynthetic growth.

The protein localises to the plastid. It is found in the chloroplast thylakoid membrane. The catalysed reaction is 2 a plastoquinone + 4 hnu + 2 H2O = 2 a plastoquinol + O2. Functionally, photosystem II (PSII) is a light-driven water:plastoquinone oxidoreductase that uses light energy to abstract electrons from H(2)O, generating O(2) and a proton gradient subsequently used for ATP formation. It consists of a core antenna complex that captures photons, and an electron transfer chain that converts photonic excitation into a charge separation. The D1/D2 (PsbA/PsbD) reaction center heterodimer binds P680, the primary electron donor of PSII as well as several subsequent electron acceptors. The polypeptide is Photosystem II protein D1 (Vitis vinifera (Grape)).